The chain runs to 81 residues: Putative membrane protein insertion efficiency factor (81 aa).

It belongs to the UPF0161 family.

It is found in the cell inner membrane. Functionally, could be involved in insertion of integral membrane proteins into the membrane. This chain is Putative membrane protein insertion efficiency factor, found in Legionella pneumophila (strain Lens).